A 392-amino-acid chain; its full sequence is Odorant receptor 9a (392 aa).

Topologically, residues 1–41 (MSDKVKGKKQEEKDQSLRVQILVYRCMGIDLWSPTMANDRP) are cytoplasmic. The chain crosses the membrane as a helical span at residues 42–62 (WLTFVTMGPLFLFMVPMFLAA). Residues 63 to 74 (HEYITQVSLLSD) are Extracellular-facing. The chain crosses the membrane as a helical span at residues 75-95 (TLGSTFASMLTLVKFLLFCYH). The Cytoplasmic portion of the chain corresponds to 96 to 141 (RKEFVGLIYHIRAILAKEIEVWPDAREIIEVENQSDQMLSLTYTRC). The helical transmembrane segment at 142–162 (FGLAGIFAALKPFVGIILSSI) threads the bilayer. Residues 163 to 202 (RGDEIHLELPHNGVYPYDLQVVMFYVPTYLWNVMASYSAV) are Extracellular-facing. Residues 203 to 223 (TMALCVDSLLFFFTYNVCAIF) form a helical membrane-spanning segment. Over 224–268 (KIAKHRMIHLPAVGGKEELEGLVQVLLLHQKGLQIADHIADKYRP) the chain is Cytoplasmic. A helical membrane pass occupies residues 269–289 (LIFLQFFLSALQICFIGFQVA). The Extracellular segment spans residues 290–297 (DLFPNPQS). The helical transmembrane segment at 298-318 (LYFIAFVGSLLIALFIYSKCG) threads the bilayer. Residues 319–362 (ENIKSASLDFGNGLYETNWTDFSPPTKRALLIAAMRAQRPCQMK) are Cytoplasmic-facing. Residues 363–383 (GYFFEASMATFSTIVRSAVSY) traverse the membrane as a helical segment. At 384-392 (IMMLRSFNA) the chain is on the extracellular side.

Belongs to the insect chemoreceptor superfamily. Heteromeric odorant receptor channel (TC 1.A.69) family. Or1a subfamily. In terms of assembly, interacts with Orco. Complexes exist early in the endomembrane system in olfactory sensory neurons (OSNs), coupling these complexes to the conserved ciliary trafficking pathway. As to expression, expressed in olfactory sensory neurons in the antenna.

The protein localises to the cell membrane. In terms of biological role, odorant receptor which mediates acceptance or avoidance behavior, depending on its substrates. The odorant receptor repertoire encodes a large collection of odor stimuli that vary widely in identity, intensity, and duration. May form a complex with Orco to form odorant-sensing units, providing sensitive and prolonged odorant signaling and calcium permeability. The protein is Odorant receptor 9a (Or9a) of Drosophila melanogaster (Fruit fly).